Consider the following 305-residue polypeptide: MAKSRNPSLGQVSDFDIRLLRIFKTIVECGSFSAAESTLGLSRSAISLHMGDLEKRLGMRLCQRGRAGFALTDEGREVYRATQTLLAALEGFRAEVNDLHQHLRGELNIGIINNLVTLPQMRITHALSALKGQGPQVRINIGMTTPNEIELGVLDGHLHVGVVPLISPLSGLEYLPLYDEHAQLYCSRGHALFERADGDIAVDEVLAADAVAPSYRLPAEAQARHQELNNSASASDREGMAFLILTGNFIGYLPSHYAADWVAAGMLRPLLPERFHYAIALTIVTRKGRRPNLVLERFLEAVAVS.

The region spanning 15-72 (FDIRLLRIFKTIVECGSFSAAESTLGLSRSAISLHMGDLEKRLGMRLCQRGRAGFALT) is the HTH lysR-type domain.

Belongs to the LysR transcriptional regulatory family.

Involved in the degradation of beta-alanine. BauR activates the transcription of the bauABCD operon. The chain is HTH-type transcriptional activator BauR (bauR) from Pseudomonas aeruginosa (strain ATCC 15692 / DSM 22644 / CIP 104116 / JCM 14847 / LMG 12228 / 1C / PRS 101 / PAO1).